Consider the following 442-residue polypeptide: 3-isopropylmalate dehydratase large subunit (442 aa).

3 residues coordinate [4Fe-4S] cluster: Cys-347, Cys-407, and Cys-410.

Belongs to the aconitase/IPM isomerase family. LeuC type 1 subfamily. As to quaternary structure, heterodimer of LeuC and LeuD. Requires [4Fe-4S] cluster as cofactor.

It catalyses the reaction (2R,3S)-3-isopropylmalate = (2S)-2-isopropylmalate. Its pathway is amino-acid biosynthesis; L-leucine biosynthesis; L-leucine from 3-methyl-2-oxobutanoate: step 2/4. Catalyzes the isomerization between 2-isopropylmalate and 3-isopropylmalate, via the formation of 2-isopropylmaleate. The sequence is that of 3-isopropylmalate dehydratase large subunit from Buchnera aphidicola subsp. Uroleucon solidaginis.